The following is a 394-amino-acid chain: Elongation factor Tu (394 aa).

The tr-type G domain occupies 10-204; the sequence is KPHINIGTIG…AVDDNIPTPE (195 aa). The G1 stretch occupies residues 19–26; it reads GHVDHGKT. 19-26 is a binding site for GTP; that stretch reads GHVDHGKT. Mg(2+) is bound at residue Thr-26. The segment at 60 to 64 is G2; that stretch reads GITIN. Positions 81-84 are G3; the sequence is DCPG. GTP-binding positions include 81-85 and 136-139; these read DCPGH and NKID. Residues 136-139 are G4; sequence NKID. The interval 174 to 176 is G5; sequence SAL.

Belongs to the TRAFAC class translation factor GTPase superfamily. Classic translation factor GTPase family. EF-Tu/EF-1A subfamily. As to quaternary structure, monomer.

It is found in the cytoplasm. It catalyses the reaction GTP + H2O = GDP + phosphate + H(+). Functionally, GTP hydrolase that promotes the GTP-dependent binding of aminoacyl-tRNA to the A-site of ribosomes during protein biosynthesis. This is Elongation factor Tu from Chlamydia trachomatis serovar L2 (strain ATCC VR-902B / DSM 19102 / 434/Bu).